The primary structure comprises 419 residues: Histidine--tRNA ligase (419 aa).

The protein belongs to the class-II aminoacyl-tRNA synthetase family. As to quaternary structure, homodimer.

It localises to the cytoplasm. The enzyme catalyses tRNA(His) + L-histidine + ATP = L-histidyl-tRNA(His) + AMP + diphosphate + H(+). The protein is Histidine--tRNA ligase of Mycoplasmoides gallisepticum (strain R(low / passage 15 / clone 2)) (Mycoplasma gallisepticum).